We begin with the raw amino-acid sequence, 89 residues long: Small ribosomal subunit protein bS20 (89 aa).

Over residues 1-11 (MANHKSAEKRN) the composition is skewed to basic and acidic residues. Residues 1–30 (MANHKSAEKRNRQNQVARLRNKSTRTAMKN) form a disordered region.

This sequence belongs to the bacterial ribosomal protein bS20 family.

In terms of biological role, binds directly to 16S ribosomal RNA. The polypeptide is Small ribosomal subunit protein bS20 (Desulfotalea psychrophila (strain LSv54 / DSM 12343)).